Here is a 948-residue protein sequence, read N- to C-terminus: 3-hydroxy-3-methylglutaryl-coenzyme A reductase (948 aa).

6 consecutive transmembrane segments (helical) span residues Leu9 to Ile25, Val55 to Cys71, Leu96 to Val112, Thr124 to Leu140, Ile207 to Ile223, and Cys286 to Leu302. Asn316 carries an N-linked (GlcNAc...) asparagine glycan. Residues Val347 to Phe363 form a helical membrane-spanning segment. The interval Lys364 to Leu466 is linker. N-linked (GlcNAc...) asparagine glycosylation occurs at Asn430. Residues Gly467–Met948 form a catalytic region. Active-site charge relay system residues include Glu567, Lys699, and Asp777. The active-site Proton donor is His869. N-linked (GlcNAc...) asparagine glycosylation is present at Asn895.

It belongs to the HMG-CoA reductase family.

The protein resides in the endoplasmic reticulum membrane. It is found in the peroxisome membrane. The catalysed reaction is (R)-mevalonate + 2 NADP(+) + CoA = (3S)-3-hydroxy-3-methylglutaryl-CoA + 2 NADPH + 2 H(+). It functions in the pathway metabolic intermediate biosynthesis; (R)-mevalonate biosynthesis; (R)-mevalonate from acetyl-CoA: step 3/3. This transmembrane glycoprotein is involved in the control of cholesterol and nonsterol isoprenoid compounds biosynthesis. It is the rate-limiting enzyme of sterol biosynthesis. The chain is 3-hydroxy-3-methylglutaryl-coenzyme A reductase from Schistosoma mansoni (Blood fluke).